Here is a 385-residue protein sequence, read N- to C-terminus: Nod factor hydrolase protein 1 (385 aa).

The N-terminal stretch at 1-21 (MANFLKLKQFLTLVLILLALA) is a signal peptide. A GH18 domain is found at 36–385 (RVKGIYWIEN…TASKAWRPES (350 aa)). N-linked (GlcNAc...) asparagine glycosylation is found at N115 and N134. E153 acts as the Proton donor in catalysis. N233 and N247 each carry an N-linked (GlcNAc...) asparagine glycan.

The protein belongs to the glycosyl hydrolase 18 family. Chitinase class V subfamily.

Symbiotic enzyme that hydrolytically inactivates Nod factors (NFs) with a C16:2 acyl chain produced by the microsymbiont Sinorhizobium meliloti. NFs are lipo-chitooligosaccharide signaling molecules produced by nitrogen-fixing rhizobia to initiate nodulation (symbiosis) on the roots of legumes. Controls NF hydrolysis at the stage of root hair infection. Involved in the regulation of growth and branching of mature nodules. Modulates NF levels and signaling to complete transition of infected nodules to functional nitrogen-fixing organs. Lacks chitinase activity in vitro toward glycol chitin, carboxymethyl-chitin, colloidal chitin, and the chitin oligosaccharides (N-acetylglucosamine) (GlcNAc)6 and (GlcNAc)5. This chain is Nod factor hydrolase protein 1, found in Medicago truncatula (Barrel medic).